A 448-amino-acid chain; its full sequence is FAD-dependent monooxygenase srdH (448 aa).

Residues glutamate 32 and arginine 107 each coordinate FAD. Glutamine 227 is an active-site residue. FAD is bound at residue aspartate 313.

Belongs to the paxM FAD-dependent monooxygenase family. The cofactor is FAD.

Highly reducing polyketide synthase; part of the gene cluster that mediates the biosynthesis of sordarial, a salicylic aldehyde structurally related to the phytotoxin pyriculol. The most interesting aspect of this pathway is formation of an aromatic product from the highly reducing polyketide synthase srdA. SrdA synthesizes a reduced polyketide chain from one molecule of acetyl-CoA and five molecules of malonyl-CoA. The polyketide chain is then reductively released as an aldehyde. The oxidoreductases srdC, srdD and srdE then oxidize one of the hydroxy groups to facilitate the intramolecular aldol condensation, followed by dehydration to yield a salicylic aldehyde. This aldehyde can undergo facile reduction by endogenous reductases to yield the alcohol 1-hydroxy-2-hydroxymethyl-3-pent-1,3-dienylbenzene. The flavin-dependent srdI counteract against the propensity of the aldehydes to be reduced under physiological conditions and is responsible for reoxidizing 1-hydroxy-2-hydroxymethyl-3-pent-1,3-dienylbenzene back to the salicylic aldehyde. This salicylic aldehyde is then selectively epoxidized by the cupin-domain-containing oxidoreductase srdB to yield the epoxide, which can be hydrolyzed stereoselectively by the hydrolase srdG to give the final product sordarial. The polypeptide is FAD-dependent monooxygenase srdH (Neurospora crassa (strain ATCC 24698 / 74-OR23-1A / CBS 708.71 / DSM 1257 / FGSC 987)).